The following is a 466-amino-acid chain: Vimentin (466 aa).

Low complexity-rich tracts occupy residues 1-13 and 20-33; these read MSTR…SYRR and TSSR…YVTT. Residues 1 to 33 form a disordered region; sequence MSTRSVSSSSYRRMFGGSGTSSRPSSNRSYVTT. S2 carries the N-acetylserine modification. Residues 2–95 form a head region; sequence STRSVSSSSY…FSLADAINTE (94 aa). Position 5 is a phosphoserine (S5). The residue at position 7 (S7) is a Phosphoserine; by PKA and PKC; alternate. S7 is a glycosylation site (O-linked (GlcNAc) serine; alternate). S8 carries the phosphoserine modification. A phosphoserine; by PKC mark is found at S9 and S10. Residue T20 is modified to Phosphothreonine. A phosphoserine mark is found at S25 and S26. The O-linked (GlcNAc) threonine glycan is linked to T33. O-linked (GlcNAc) serine; alternate glycosylation is present at S34. At S34 the chain carries Phosphoserine; by PKC; alternate. S39 carries the post-translational modification Phosphoserine; by CaMK2, PKA, PKC and ROCK2. Residue S42 is modified to Phosphoserine; by PKC. S47 bears the Phosphoserine; by PKA mark. Phosphoserine occurs at positions 49 and 51. Y53 is modified (phosphotyrosine). A phosphoserine mark is found at S55 and S56. Phosphotyrosine is present on Y61. Residue S66 is modified to Phosphoserine; by PKA and PKC. A Phosphoserine; by AURKB and ROCK2 modification is found at S72. A phosphoserine mark is found at S73, S83, and S87. Positions 96-131 are coil 1A; sequence FKNTRTNEKVELQELNDRFANYIDKVRFLEQQNKIL. Positions 96–131 form a coiled coil; the sequence is FKNTRTNEKVELQELNDRFANYIDKVRFLEQQNKIL. The IF rod domain occupies 103–411; sequence EKVELQELND…KLLEGEESRI (309 aa). A Glycyl lysine isopeptide (Lys-Gly) (interchain with G-Cter in SUMO2) cross-link involves residue K104. A Phosphotyrosine modification is found at Y117. An N6-acetyllysine; alternate mark is found at K120, K129, and K139. N6-succinyllysine; alternate occurs at positions 120 and 129. Glycyl lysine isopeptide (Lys-Gly) (interchain with G-Cter in SUMO2); alternate cross-links involve residues K120, K129, and K139. The linker 1 stretch occupies residues 132–153; the sequence is LAELEQLKGQGKSRLGDLYEEE. At S144 the chain carries Phosphoserine. Residues 154-245 are a coiled coil; it reads MRELRRQVDQ…KLHDEEIQEL (92 aa). The interval 154 to 245 is coil 1B; the sequence is MRELRRQVDQ…KLHDEEIQEL (92 aa). Position 168 is an N6-acetyllysine (K168). K188 carries the N6-acetyllysine; alternate modification. Residue K188 is modified to N6-succinyllysine; alternate. S214 carries the post-translational modification Phosphoserine. At K223 the chain carries N6-acetyllysine; alternate. K223 is covalently cross-linked (Glycyl lysine isopeptide (Lys-Gly) (interchain with G-Cter in SUMO2); alternate). A Phosphoserine modification is found at S226. K235 bears the N6-acetyllysine mark. The interval 246 to 268 is linker 12; it reads QAQIQEQHVQIDVDVSKPDLTAA. A Glycyl lysine isopeptide (Lys-Gly) (interchain with G-Cter in SUMO2) cross-link involves residue K262. Positions 269–407 are coil 2; the sequence is LRDVRQQYES…ATYRKLLEGE (139 aa). K294 carries the post-translational modification N6-acetyllysine; alternate. The residue at position 294 (K294) is an N6-succinyllysine; alternate. A Glycyl lysine isopeptide (Lys-Gly) (interchain with G-Cter in SUMO2); alternate cross-link involves residue K294. A Phosphoserine modification is found at S299. Residues 303 to 407 are a coiled coil; the sequence is NRNNDALRQA…ATYRKLLEGE (105 aa). Residue K313 forms a Glycyl lysine isopeptide (Lys-Gly) (interchain with G-Cter in SUMO2) linkage. Position 325 is a phosphoserine (S325). A [IL]-x-C-x-x-[DE] motif motif is present at residues 326 to 329; sequence LTCE. The residue at position 373 (K373) is an N6-acetyllysine; alternate. K373 is covalently cross-linked (Glycyl lysine isopeptide (Lys-Gly) (interchain with G-Cter in SUMO2); alternate). Residues 408–466 form a tail region; that stretch reads ESRISLPLPNFSSLNLRETNLESLPLVDTHSKRTLLIKTVETRDGQVINETSQHHDDLE. A phosphoserine mark is found at S409, S412, S419, and S420. T426 is modified (phosphothreonine). The residue at position 430 (S430) is a Phosphoserine. T436 carries the phosphothreonine modification. S438 carries the phosphoserine modification. A Glycyl lysine isopeptide (Lys-Gly) (interchain with G-Cter in SUMO2) cross-link involves residue K439. The residue at position 445 (K445) is an N6-acetyllysine; alternate. K445 carries the N6-succinyllysine; alternate modification. K445 participates in a covalent cross-link: Glycyl lysine isopeptide (Lys-Gly) (interchain with G-Cter in SUMO2); alternate. K445 participates in a covalent cross-link: Glycyl lysine isopeptide (Lys-Gly) (interchain with G-Cter in SUMO1); alternate. Phosphothreonine is present on residues T446 and T458. S459 is modified (phosphoserine).

Belongs to the intermediate filament family. In terms of assembly, homomer assembled from elementary dimers. Identified in complexes that contain VIM, EZR, AHNAK, BFSP1, BFSP2, ANK2, PLEC, PRX and spectrin. Interacts with BCAS3. Interacts with LGSN. Interacts with SYNM. Interacts (via rod region) with PLEC (via CH 1 domain). Interacts with STK33. Interacts with LARP6. Interacts with RAB8B. Interacts with TOR1A; the interaction associates TOR1A with the cytoskeleton. Interacts with TOR1AIP1. Interacts with TOR1AIP1. Interacts with DIAPH1. Interacts with EPPK1; interaction is dependent of higher-order structure of intermediate filament. Interacts with the non-receptor tyrosine kinase SRMS; the interaction leads to phosphorylation of VIM. Interacts with NOD2. Interacts (via head region) with CORO1C. Interacts with HDGF. Interacts with PRKCE (via phorbol-ester/DAG-type 2 domain). Interacts with BFSP2. Interacts with PPL. Interacts with PKP1 and PKP2. Interacts with SCRIB (via PDZ domains); the interaction protects SCRIB from proteasomal degradation and facilitates SCRIB localization to intermediate filaments, the interaction is reduced by cell contact inhibition. One of the most prominent phosphoproteins in various cells of mesenchymal origin. Phosphorylation is enhanced during cell division, at which time vimentin filaments are significantly reorganized. Phosphorylation by PKN1 inhibits the formation of filaments. Filament disassembly during mitosis is promoted by phosphorylation at Ser-55 as well as by nestin. Phosphorylated at Ser-56 by CDK5 during neutrophil secretion in the cytoplasm. Phosphorylated by STK33. Phosphorylated on tyrosine residues by SRMS. In terms of processing, S-nitrosylation is induced by interferon-gamma and oxidatively-modified low-densitity lipoprotein (LDL(ox)) possibly implicating the iNOS-S100A8/9 transnitrosylase complex.

It is found in the cytoplasm. The protein resides in the cytoskeleton. The protein localises to the nucleus matrix. Its subcellular location is the cell membrane. Vimentins are class-III intermediate filaments found in various non-epithelial cells, especially mesenchymal cells. Vimentin is attached to the nucleus, endoplasmic reticulum, and mitochondria, either laterally or terminally. Plays a role in cell directional movement, orientation, cell sheet organization and Golgi complex polarization at the cell migration front. Protects SCRIB from proteasomal degradation and facilitates its localization to intermediate filaments in a cell contact-mediated manner. In terms of biological role, involved with LARP6 in the stabilization of type I collagen mRNAs for CO1A1 and CO1A2. The protein is Vimentin of Rattus norvegicus (Rat).